The following is a 256-amino-acid chain: MAQREEAGPSSVDPEDVARFDRIGEDWWSADGPMAALHKLNPVRVAYLRDLMSRHFRVEGLPRDRYAPRPLEGLRILDAGCGAGLLAEPLARLGARVTAIDPAPRNIEVARRHAEKSGLSIDYRMTTIEALSGEAATFDAVLAMEVLEHVLDVAGFVRCCGALVRPGGLMFAATLNRTLKSFAFAIVGAEYVLGWAPRGTHDWRRFISPRELARAMAAADLSAFDETGVVFDPLQGGWRLAHDTDINYMMAASKRR.

Residues Arg-44, Gly-80, Asp-101, and Met-144 each contribute to the S-adenosyl-L-methionine site.

This sequence belongs to the methyltransferase superfamily. UbiG/COQ3 family.

The catalysed reaction is a 3-demethylubiquinol + S-adenosyl-L-methionine = a ubiquinol + S-adenosyl-L-homocysteine + H(+). It carries out the reaction a 3-(all-trans-polyprenyl)benzene-1,2-diol + S-adenosyl-L-methionine = a 2-methoxy-6-(all-trans-polyprenyl)phenol + S-adenosyl-L-homocysteine + H(+). It participates in cofactor biosynthesis; ubiquinone biosynthesis. In terms of biological role, O-methyltransferase that catalyzes the 2 O-methylation steps in the ubiquinone biosynthetic pathway. In Methylocella silvestris (strain DSM 15510 / CIP 108128 / LMG 27833 / NCIMB 13906 / BL2), this protein is Ubiquinone biosynthesis O-methyltransferase.